The following is a 371-amino-acid chain: Cytochrome b (371 aa).

4 helical membrane passes run phenylalanine 25–methionine 45, tryptophan 69–isoleucine 90, tryptophan 105–leucine 125, and phenylalanine 170–methionine 190. Residues histidine 75 and histidine 89 each coordinate heme b. Residues histidine 174 and histidine 188 each coordinate heme b. Histidine 193 contributes to the a ubiquinone binding site. Transmembrane regions (helical) follow at residues tyrosine 218 to phenylalanine 238, leucine 280 to histidine 300, leucine 312 to threonine 332, and phenylalanine 339 to proline 358.

This sequence belongs to the cytochrome b family. The cytochrome bc1 complex contains 3 respiratory subunits (MT-CYB, CYC1 and UQCRFS1), 2 core proteins (UQCRC1 and UQCRC2) and probably 6 low-molecular weight proteins. It depends on heme b as a cofactor.

The protein localises to the mitochondrion inner membrane. Functionally, component of the ubiquinol-cytochrome c reductase complex (complex III or cytochrome b-c1 complex) that is part of the mitochondrial respiratory chain. The b-c1 complex mediates electron transfer from ubiquinol to cytochrome c. Contributes to the generation of a proton gradient across the mitochondrial membrane that is then used for ATP synthesis. This is Cytochrome b (MT-CYB) from Candoia carinata (Papuan tree boa).